A 510-amino-acid chain; its full sequence is Beta-glucosidase 34 (510 aa).

The N-terminal stretch at 1 to 26 (MGNGGRCMVEVVILLVLMAMSQGCDA) is a signal peptide. A glycan (N-linked (GlcNAc...) asparagine) is linked at N28. Q52 serves as a coordination point for a beta-D-glucoside. Residue N120 is glycosylated (N-linked (GlcNAc...) asparagine). A beta-D-glucoside-binding positions include H153 and 198-199 (NE). E199 acts as the Proton donor in catalysis. C218 and C226 are oxidised to a cystine. N-linked (GlcNAc...) asparagine glycosylation is found at N279 and N331. Y342 contacts a beta-D-glucoside. N-linked (GlcNAc...) asparagine glycosylation occurs at N360. Residues E415, W465, 472-473 (EW), and F481 each bind a beta-D-glucoside. E415 acts as the Nucleophile in catalysis.

This sequence belongs to the glycosyl hydrolase 1 family.

It carries out the reaction Hydrolysis of terminal, non-reducing beta-D-glucosyl residues with release of beta-D-glucose.. This chain is Beta-glucosidase 34 (BGLU34), found in Oryza sativa subsp. japonica (Rice).